Reading from the N-terminus, the 500-residue chain is Glycerol kinase (500 aa).

Threonine 13 lines the ADP pocket. ATP contacts are provided by threonine 13, threonine 14, and serine 15. A sn-glycerol 3-phosphate-binding site is contributed by threonine 13. Arginine 17 contributes to the ADP binding site. Sn-glycerol 3-phosphate is bound by residues arginine 83, glutamate 84, tyrosine 135, and aspartate 244. 5 residues coordinate glycerol: arginine 83, glutamate 84, tyrosine 135, aspartate 244, and glutamine 245. Positions 266 and 309 each coordinate ADP. Positions 266, 309, 313, and 410 each coordinate ATP. ADP contacts are provided by glycine 410 and asparagine 414.

Belongs to the FGGY kinase family.

It catalyses the reaction glycerol + ATP = sn-glycerol 3-phosphate + ADP + H(+). It participates in polyol metabolism; glycerol degradation via glycerol kinase pathway; sn-glycerol 3-phosphate from glycerol: step 1/1. Inhibited by fructose 1,6-bisphosphate (FBP). In terms of biological role, key enzyme in the regulation of glycerol uptake and metabolism. Catalyzes the phosphorylation of glycerol to yield sn-glycerol 3-phosphate. The chain is Glycerol kinase from Burkholderia cenocepacia (strain HI2424).